Consider the following 242-residue polypeptide: Fibrinolytic enzyme, isozyme C (242 aa).

Positions 1 to 242 (VIGGTNASPG…YLGWIGDNSR (242 aa)) constitute a Peptidase S1 domain. An intrachain disulfide couples cysteine 29 to cysteine 45. Residues histidine 44 and aspartate 93 each act as charge relay system in the active site. 3 disulfide bridges follow: cysteine 127–cysteine 197, cysteine 158–cysteine 176, and cysteine 187–cysteine 219. Serine 191 functions as the Charge relay system in the catalytic mechanism.

The protein belongs to the peptidase S1 family.

This is Fibrinolytic enzyme, isozyme C from Lumbricus rubellus (Humus earthworm).